Reading from the N-terminus, the 546-residue chain is Metal transporter Nramp6.2 (546 aa).

8 helical membrane passes run 50 to 70, 83 to 103, 128 to 150, 154 to 176, 187 to 207, 233 to 253, 270 to 290, and 333 to 353; these read FLPY…PGNL, ELLW…SLAA, SLWL…GTAF, ILFH…LLLG, LLIS…LSYV, IALL…ALVL, YFLI…VSII, and IYAI…TYAG. N-linked (GlcNAc...) asparagine glycosylation occurs at asparagine 371. 4 consecutive transmembrane segments (helical) span residues 374-394, 397-417, 433-453, and 473-493; these read TRCI…SSGA, LIII…IPLL, IYII…NVYY, and VIIG…IIYL.

It belongs to the NRAMP (TC 2.A.55) family.

The protein localises to the membrane. In terms of biological role, probable divalent metal transporter. This chain is Metal transporter Nramp6.2, found in Populus trichocarpa (Western balsam poplar).